Here is a 208-residue protein sequence, read N- to C-terminus: 3-demethoxyubiquinol 3-hydroxylase (208 aa).

Positions 57, 87, 90, 139, 171, and 174 each coordinate Fe cation.

This sequence belongs to the COQ7 family. Fe cation serves as cofactor.

Its subcellular location is the cell membrane. The enzyme catalyses a 5-methoxy-2-methyl-3-(all-trans-polyprenyl)benzene-1,4-diol + AH2 + O2 = a 3-demethylubiquinol + A + H2O. The protein operates within cofactor biosynthesis; ubiquinone biosynthesis. Functionally, catalyzes the hydroxylation of 2-nonaprenyl-3-methyl-6-methoxy-1,4-benzoquinol during ubiquinone biosynthesis. The chain is 3-demethoxyubiquinol 3-hydroxylase from Nitrosomonas eutropha (strain DSM 101675 / C91 / Nm57).